The sequence spans 463 residues: Senescence/dehydration-associated protein At3g51250 (463 aa).

Positions 1 to 12 are enriched in basic and acidic residues; that stretch reads MNPSHGGDDKQR. Disordered stretches follow at residues 1–31, 52–74, and 146–172; these read MNPS…FAST, PNLF…PQAT, and IHPP…KSKS. A compositionally biased stretch (polar residues) spans 19–31; that stretch reads VDQSIPDNPFAST. Positions 269-437 constitute a Senescence domain; the sequence is IASGSGKLIR…AWVAFKIRKA (169 aa).

The protein is Senescence/dehydration-associated protein At3g51250 of Arabidopsis thaliana (Mouse-ear cress).